We begin with the raw amino-acid sequence, 194 residues long: Adenylate kinase (194 aa).

12 to 17 contacts ATP; the sequence is GSGKTT. Positions 34–63 are NMP; sequence STGDLLREEVKKGTPLGATIASFIDNGQLV. Residues Thr-35, Arg-40, 61–63, 88–91, and Gln-95 each bind AMP; these read QLV and GFPR. The tract at residues 130-136 is LID; the sequence is GRARGAD. Position 131 (Arg-131) interacts with ATP. Residues Arg-133 and Arg-145 each contribute to the AMP site. Arg-173 is an ATP binding site.

This sequence belongs to the adenylate kinase family. As to quaternary structure, monomer.

Its subcellular location is the cytoplasm. It carries out the reaction AMP + ATP = 2 ADP. Its pathway is purine metabolism; AMP biosynthesis via salvage pathway; AMP from ADP: step 1/1. Catalyzes the reversible transfer of the terminal phosphate group between ATP and AMP. Plays an important role in cellular energy homeostasis and in adenine nucleotide metabolism. The polypeptide is Adenylate kinase (Nitratiruptor sp. (strain SB155-2)).